Here is a 339-residue protein sequence, read N- to C-terminus: AT-hook motif nuclear-localized protein 26 (339 aa).

Over residues 1-12 the composition is skewed to polar residues; that stretch reads MDPVQSHGSQSS. 2 disordered regions span residues 1-132 and 273-339; these read MDPV…NKPK and MQTP…RPPY. Low complexity predominate over residues 24–45; that stretch reads LHLQQQQQHQQQHQQQQQQQFF. Residues 82-93 are compositionally biased toward polar residues; it reads NMDNIANTNSGS. Over residues 102–113 the composition is skewed to gly residues; that stretch reads GGEGGSGGGGSG. Residues 118–130 constitute a DNA-binding region (a.T hook); the sequence is RRPRGRPAGSKNK. The 138-residue stretch at 142 to 279 folds into the PPC domain; sequence ANALRTHVME…EDEMQTPVQG (138 aa). Positions 278 to 291 are enriched in gly residues; sequence QGGGGGGGGGGGMG. Over residues 292 to 310 the composition is skewed to low complexity; sequence SPPMMGQQQAMAAMAAAQG.

The protein localises to the nucleus. Its function is as follows. Transcription factor that specifically binds AT-rich DNA sequences related to the nuclear matrix attachment regions (MARs). In Arabidopsis thaliana (Mouse-ear cress), this protein is AT-hook motif nuclear-localized protein 26.